The following is a 118-amino-acid chain: Large ribosomal subunit protein uL18 (118 aa).

The disordered stretch occupies residues 1 to 24 (MITKPDKNKIRQKRHRRVRGKLSG). The span at 10–20 (IRQKRHRRVRG) shows a compositional bias: basic residues.

Belongs to the universal ribosomal protein uL18 family. As to quaternary structure, part of the 50S ribosomal subunit; part of the 5S rRNA/L5/L18/L25 subcomplex. Contacts the 5S and 23S rRNAs.

Functionally, this is one of the proteins that bind and probably mediate the attachment of the 5S RNA into the large ribosomal subunit, where it forms part of the central protuberance. The chain is Large ribosomal subunit protein uL18 from Streptococcus sanguinis (strain SK36).